A 272-amino-acid polypeptide reads, in one-letter code: 3-deoxy-manno-octulosonate cytidylyltransferase (272 aa).

This sequence belongs to the KdsB family.

It is found in the cytoplasm. It carries out the reaction 3-deoxy-alpha-D-manno-oct-2-ulosonate + CTP = CMP-3-deoxy-beta-D-manno-octulosonate + diphosphate. It participates in nucleotide-sugar biosynthesis; CMP-3-deoxy-D-manno-octulosonate biosynthesis; CMP-3-deoxy-D-manno-octulosonate from 3-deoxy-D-manno-octulosonate and CTP: step 1/1. It functions in the pathway bacterial outer membrane biogenesis; lipopolysaccharide biosynthesis. Functionally, activates KDO (a required 8-carbon sugar) for incorporation into bacterial lipopolysaccharide in Gram-negative bacteria. This is 3-deoxy-manno-octulosonate cytidylyltransferase from Verminephrobacter eiseniae (strain EF01-2).